The sequence spans 298 residues: UPF0282 protein Kcr_0286 (298 aa).

It belongs to the UPF0282 family.

This Korarchaeum cryptofilum (strain OPF8) protein is UPF0282 protein Kcr_0286.